Consider the following 222-residue polypeptide: Putative adhesin RP828 (222 aa).

The signal sequence occupies residues 1–22 (MKKLLLIATASATILSSSVSFA).

Adheres to biotinylated epithelial (Vero cell) proteins. The polypeptide is Putative adhesin RP828 (Rickettsia prowazekii (strain Madrid E)).